The following is a 485-amino-acid chain: Glutamyl-tRNA(Gln) amidotransferase subunit A (485 aa).

Active-site charge relay system residues include lysine 79 and serine 154. Serine 178 serves as the catalytic Acyl-ester intermediate.

The protein belongs to the amidase family. GatA subfamily. In terms of assembly, heterotrimer of A, B and C subunits.

The catalysed reaction is L-glutamyl-tRNA(Gln) + L-glutamine + ATP + H2O = L-glutaminyl-tRNA(Gln) + L-glutamate + ADP + phosphate + H(+). In terms of biological role, allows the formation of correctly charged Gln-tRNA(Gln) through the transamidation of misacylated Glu-tRNA(Gln) in organisms which lack glutaminyl-tRNA synthetase. The reaction takes place in the presence of glutamine and ATP through an activated gamma-phospho-Glu-tRNA(Gln). The protein is Glutamyl-tRNA(Gln) amidotransferase subunit A of Bacillus velezensis (strain DSM 23117 / BGSC 10A6 / LMG 26770 / FZB42) (Bacillus amyloliquefaciens subsp. plantarum).